Reading from the N-terminus, the 880-residue chain is Alanine--tRNA ligase (880 aa).

4 residues coordinate Zn(2+): His-567, His-571, Cys-669, and His-673.

This sequence belongs to the class-II aminoacyl-tRNA synthetase family. Zn(2+) is required as a cofactor.

It is found in the cytoplasm. It carries out the reaction tRNA(Ala) + L-alanine + ATP = L-alanyl-tRNA(Ala) + AMP + diphosphate. Its function is as follows. Catalyzes the attachment of alanine to tRNA(Ala) in a two-step reaction: alanine is first activated by ATP to form Ala-AMP and then transferred to the acceptor end of tRNA(Ala). Also edits incorrectly charged Ser-tRNA(Ala) and Gly-tRNA(Ala) via its editing domain. The chain is Alanine--tRNA ligase from Bacillus anthracis.